A 315-amino-acid chain; its full sequence is Three-prime repair exonuclease 1 (315 aa).

2 residues coordinate Mg(2+): aspartate 18 and glutamate 20. 20–21 (EA) serves as a coordination point for substrate. Serine 78 carries the phosphoserine modification. A substrate-binding site is contributed by tyrosine 129. Residue serine 167 is modified to Phosphoserine. Histidine 195 acts as the Proton donor/acceptor in catalysis. Aspartate 200 lines the Mg(2+) pocket. Aspartate 200 is a binding site for substrate. Positions 236 to 315 (TTSTGTNPRP…YGLSLAMPGQ (80 aa)) are necessary for endoplasmic reticulum localization. Residues 243–315 (PRPSAVTATV…YGLSLAMPGQ (73 aa)) are interaction with UBQLN1. Positions 256–282 (RASDTGPNLRGDRSPKPAPSPKMCPGA) are disordered. Residues 271–282 (KPAPSPKMCPGA) show a composition bias toward pro residues. Residues 282–315 (APPGEGLLAPLGLLAFLTLAVAMLYGLSLAMPGQ) are necessary for cytoplasmic retention.

It belongs to the exonuclease superfamily. TREX family. As to quaternary structure, homodimer. Interacts (via proline-rich region) with TCERG1/CA150 (via the second WW domain). Component of the SET complex, composed of at least ANP32A, APEX1, HMGB2, NME1, SET and TREX1. Within this complex, directly interacts with SET; this interaction does not result in TREX1 inhibition. Also interacts with NME1, but only following translocation to the nucleus. Directly interacts with UBQLN1 (via ubiquitin-like domain); the interaction may control TREX1 subcellular location. It depends on Mg(2+) as a cofactor. Post-translationally, ubiquitinated, but not targeted to proteasomal degradation. Ubiquitination may be important for interaction with UBQLN1.

The protein localises to the nucleus. It localises to the cytoplasm. It is found in the cytosol. Its subcellular location is the endoplasmic reticulum membrane. The enzyme catalyses Exonucleolytic cleavage in the 3'- to 5'-direction to yield nucleoside 5'-phosphates.. Its function is as follows. Major cellular 3'-to-5' DNA exonuclease which digests single-stranded DNA (ssDNA) and double-stranded DNA (dsDNA) with mismatched 3' termini. Prevents cell-intrinsic initiation of autoimmunity. Acts by metabolizing DNA fragments from endogenous retroelements, including L1, LTR and SINE elements. Plays a key role in degradation of DNA fragments at cytosolic micronuclei arising from genome instability: its association with the endoplasmic reticulum membrane directs TREX1 to ruptured micronuclei, leading to micronuclear DNA degradation. Micronuclear DNA degradation is required to limit CGAS activation and subsequent inflammation. Unless degraded, these DNA fragments accumulate in the cytosol and activate the cGAS-STING innate immune signaling, leading to the production of type I interferon. Prevents chronic ATM-dependent checkpoint activation, by processing ssDNA polynucleotide species arising from the processing of aberrant DNA replication intermediates. Inefficiently degrades oxidized DNA, such as that generated upon antimicrobial reactive oxygen production or upon absorption of UV light. During GZMA-mediated cell death, contributes to DNA damage in concert with NME1. NME1 nicks one strand of DNA and TREX1 removes bases from the free 3' end to enhance DNA damage and prevent DNA end reannealing and rapid repair. This chain is Three-prime repair exonuclease 1, found in Bos taurus (Bovine).